Here is a 164-residue protein sequence, read N- to C-terminus: UPF0114 protein YqhA (164 aa).

Transmembrane regions (helical) follow at residues 15–35 (LLAP…LKFF), 53–73 (LILV…LVMV), and 136–156 (LMWY…MGYL).

Belongs to the UPF0114 family.

The protein resides in the cell membrane. The protein is UPF0114 protein YqhA of Salmonella dublin (strain CT_02021853).